The primary structure comprises 100 residues: Integration host factor subunit alpha (100 aa).

The protein belongs to the bacterial histone-like protein family. In terms of assembly, heterodimer of an alpha and a beta chain.

In terms of biological role, this protein is one of the two subunits of integration host factor, a specific DNA-binding protein that functions in genetic recombination as well as in transcriptional and translational control. This is Integration host factor subunit alpha from Ruegeria pomeroyi (strain ATCC 700808 / DSM 15171 / DSS-3) (Silicibacter pomeroyi).